A 307-amino-acid chain; its full sequence is Olfactory receptor 5M3 (307 aa).

The Extracellular segment spans residues 1–23; sequence MLNFTDVTEFILLGLTSRREWQV. A glycan (N-linked (GlcNAc...) asparagine) is linked at Asn3. The helical transmembrane segment at 24 to 44 threads the bilayer; the sequence is LFFIIFLVVYIITMVGNIGMM. The Cytoplasmic segment spans residues 45-52; it reads VLIKVSPQ. A helical transmembrane segment spans residues 53–73; sequence LNNPMYFFLSHLSFVDVWFSS. Over 74-97 the chain is Extracellular; it reads NVTPKMLENLLSDKKTITYAGCLV. Cysteines 95 and 187 form a disulfide. Residues 98-118 traverse the membrane as a helical segment; that stretch reads QCFFFIALVHVEIFILAAMAF. Over 119 to 137 the chain is Cytoplasmic; sequence DRYMAIGNPLLYGSKMSRV. A helical transmembrane segment spans residues 138-158; the sequence is VCIRLITFPYIYGFLTSLAAT. Over 159 to 194 the chain is Extracellular; that stretch reads LWTYGLYFCGKIEINHFYCADPPLIKMACAGTFVKE. A helical membrane pass occupies residues 195 to 215; sequence YTMIILAGINFTYSLTVIIIS. The Cytoplasmic segment spans residues 216 to 235; sequence YLFILIAILRMRSAEGRQKA. A helical membrane pass occupies residues 236–256; sequence FSTCGSHLTAVIIFYGTLIFM. The Extracellular portion of the chain corresponds to 257-269; that stretch reads YLRRPTEESVEQG. A helical membrane pass occupies residues 270–290; that stretch reads KMVAVFYTTVIPMLNPMIYSL. The Cytoplasmic segment spans residues 291-307; that stretch reads RNKDVKKAMMKVISRSC.

Belongs to the G-protein coupled receptor 1 family.

It localises to the cell membrane. Odorant receptor. The polypeptide is Olfactory receptor 5M3 (OR5M3) (Homo sapiens (Human)).